Reading from the N-terminus, the 119-residue chain is Ribonuclease P protein component (119 aa).

Belongs to the RnpA family. In terms of assembly, consists of a catalytic RNA component (M1 or rnpB) and a protein subunit.

It carries out the reaction Endonucleolytic cleavage of RNA, removing 5'-extranucleotides from tRNA precursor.. Functionally, RNaseP catalyzes the removal of the 5'-leader sequence from pre-tRNA to produce the mature 5'-terminus. It can also cleave other RNA substrates such as 4.5S RNA. The protein component plays an auxiliary but essential role in vivo by binding to the 5'-leader sequence and broadening the substrate specificity of the ribozyme. This Sodalis glossinidius (strain morsitans) protein is Ribonuclease P protein component.